The following is a 197-amino-acid chain: Probable deoxycytidylate deaminase (197 aa).

A CMP/dCMP-type deaminase domain is found at 49–183 (KKHQRFLRIA…KMLDHARLPY (135 aa)). A Zn(2+)-binding site is contributed by H117. The active-site Proton donor is E119. The Zn(2+) site is built by C143 and C146.

Belongs to the cytidine and deoxycytidylate deaminase family. Zn(2+) is required as a cofactor.

The enzyme catalyses dCMP + H2O + H(+) = dUMP + NH4(+). Its function is as follows. Supplies the nucleotide substrate for thymidylate synthetase. The chain is Probable deoxycytidylate deaminase from Caenorhabditis elegans.